Consider the following 243-residue polypeptide: MYEVKLDAFNGPLDLLLHLIQKYEIDIYDIPMKSLTEQYMQYVHAMKQLEINVASEYLVMASELLMIKSKLLLPQHDVDDNLEEDPREDLVGRLIEYQNYKEYTQLLTEKKEEREHYFTKHPTDLSHLEKNVTWDECQTLDLTDLIVAYQRVKSRLALNKPKTVEIIKESFTIQQATEKVTTQLRHHTSFNFFSLFTFSEPIEQVVTHFLAILEMSKSGVINIEQVRSFDDIRIIRGVNFNIG.

Belongs to the ScpA family. In terms of assembly, component of a cohesin-like complex composed of ScpA, ScpB and the Smc homodimer, in which ScpA and ScpB bind to the head domain of Smc. The presence of the three proteins is required for the association of the complex with DNA.

It is found in the cytoplasm. In terms of biological role, participates in chromosomal partition during cell division. May act via the formation of a condensin-like complex containing Smc and ScpB that pull DNA away from mid-cell into both cell halves. This is Segregation and condensation protein A from Staphylococcus haemolyticus (strain JCSC1435).